We begin with the raw amino-acid sequence, 1368 residues long: Kinesin-like protein KIF24 (1368 aa).

An SAM domain is found at 1-64 (MASWLYECLC…FQLIKIIKIM (64 aa)). Residues 89–112 (ELRSGPRRQLNFDSPADNKDRNAS) form a disordered region. A phosphoserine mark is found at S102 and S112. In terms of domain architecture, Kinesin motor spans 223–546 (KIRVCVRKRP…LRYADRVKEL (324 aa)). 313-320 (GQTGAGKT) is an ATP binding site. S478 is subject to Phosphoserine. Residues 478–709 (SLLALKECIR…STKCKKVQTV (232 aa)) are interaction with MPHOSPH9. Over residues 557 to 576 (TSRNRTSGNSSPKRIQSSPG) the composition is skewed to polar residues. Disordered stretches follow at residues 557 to 584 (TSRN…DKCS) and 602 to 639 (GSTR…SPSQ). S584 carries the post-translational modification Phosphoserine. T621 is subject to Phosphothreonine; by NEK2. At S622 the chain carries Phosphoserine; by NEK2. Phosphoserine is present on S646. Disordered regions lie at residues 651–670 (TVRS…PLCS), 729–753 (HRAE…WTNI), 792–849 (QYRP…NTLE), 864–938 (GPEK…LAEK), and 952–984 (RGGG…EEDG). A compositionally biased stretch (acidic residues) spans 819-830 (QVEELDDSDFSE). Phosphoserine is present on residues S826 and S829. 2 stretches are compositionally biased toward polar residues: residues 839 to 849 (QRATKQRNTLE) and 871 to 881 (ERQQSLFSSPR). The segment covering 882–906 (TGDKKDLTKSWVDSRDPINHRRAAL) has biased composition (basic and acidic residues). S1012 carries the post-translational modification Phosphoserine. Disordered regions lie at residues 1054-1073 (MSLL…QLVQ) and 1086-1148 (GGPV…SREA). The span at 1106 to 1119 (SSATRHLWLSSSPP) shows a compositional bias: polar residues. Residues 1138 to 1148 (HPADKLPSREA) are compositionally biased toward basic and acidic residues.

This sequence belongs to the TRAFAC class myosin-kinesin ATPase superfamily. Kinesin family. In terms of assembly, interacts with CCP110, CEP97, TALPID3. Interacts with MPHOSPH9.

Its subcellular location is the cytoplasm. It localises to the cytoskeleton. The protein localises to the microtubule organizing center. It is found in the centrosome. The protein resides in the centriole. Functionally, microtubule-dependent motor protein that acts as a negative regulator of ciliogenesis by mediating recruitment of CCP110 to mother centriole in cycling cells, leading to restrict nucleation of cilia at centrioles. Mediates depolymerization of microtubules of centriolar origin, possibly to suppress aberrant cilia formation. Following activation by NEK2 involved in disassembly of primary cilium during G2/M phase but does not disassemble fully formed ciliary axonemes. As cilium assembly and disassembly is proposed to coexist in a dynamic equilibrium may suppress nascent cilium assembly and, potentially, ciliar re-assembly in cells that have already disassembled their cilia ensuring the completion of cilium removal in the later stages of the cell cycle. Plays an important role in recruiting MPHOSPH9, a negative regulator of cilia formation to the distal end of mother centriole. The polypeptide is Kinesin-like protein KIF24 (KIF24) (Homo sapiens (Human)).